The chain runs to 556 residues: Polyphenol oxidase 2 (556 aa).

Cu cation-binding residues include histidine 57, histidine 81, histidine 90, histidine 250, histidine 254, and histidine 282. Residues 79 to 81 (CTH) constitute a cross-link (2'-(S-cysteinyl)-histidine (Cys-His)). Residue histidine 254 participates in substrate binding. The propeptide at 379–556 (SKPSSGARNT…FDDVAVHVIN (178 aa)) is removed in mature form.

It belongs to the tyrosinase family. As to quaternary structure, heterotetramer. Cu(2+) is required as a cofactor. Post-translationally, the C-ter is probably cleaved after Gly-378 since the mature active protein is smaller than the protein encoded by the gene.

The catalysed reaction is 2 L-dopa + O2 = 2 L-dopaquinone + 2 H2O. It catalyses the reaction L-tyrosine + O2 = L-dopaquinone + H2O. Functionally, copper-containing oxidase that catalyzes both the o-hydroxylation of monophenols and the subsequent oxidation of the resulting o-diphenols into reactive o-quinones, which evolve spontaneously to produce intermediates, which associate in dark brown pigments. Involved in the initial step of melanin synthesis. Melanins constitute a mechanism of defense and resistance to stress such as UV radiations, free radicals, gamma rays, dehydratation and extreme temperatures, and contribute to the fungal cell-wall resistance against hydrolytic enzymes in avoiding cellular lysis. Fungal pigments are also involved in the formation and stability of spores. The sequence is that of Polyphenol oxidase 2 (PPO2) from Agaricus bisporus (White button mushroom).